The sequence spans 274 residues: Putative bidirectional sugar transporter SWEET7d (274 aa).

Over 1–8 the chain is Extracellular; that stretch reads MVPDLIRN. Residues 9 to 29 form a helical membrane-spanning segment; the sequence is VVGIVGNVISFGLFLSPVPTF. One can recognise a MtN3/slv 1 domain in the interval 9 to 96; that stretch reads VVGIVGNVIS…TIFFLFSDKK (88 aa). Residues 30-45 are Cytoplasmic-facing; it reads WRIIKNKDVRDFKADQ. The helical transmembrane segment at 46 to 66 threads the bilayer; the sequence is YLATLLNCMLWVFYGLPIVHP. Over 67–68 the chain is Extracellular; it reads NS. A helical membrane pass occupies residues 69–89; it reads ILVVTINGIGLVIEAVYLTIF. Residues 90 to 100 lie on the Cytoplasmic side of the membrane; the sequence is FLFSDKKNKKK. A helical transmembrane segment spans residues 101 to 121; it reads MGVVLATEALFMAAVALGVLL. The Extracellular segment spans residues 122–130; it reads DAHTHQRRS. A helical membrane pass occupies residues 131 to 151; sequence LIVGILCVIFGTIMYSSPLTI. Residues 132 to 214 enclose the MtN3/slv 2 domain; that stretch reads IVGILCVIFG…QLILYAIYYR (83 aa). Topologically, residues 152–164 are cytoplasmic; it reads MSQVVKTKSVEYM. A helical transmembrane segment spans residues 165–185; it reads PLLLSVVSFLNGLCWTSYALI. The Extracellular portion of the chain corresponds to 186–188; sequence RFD. Residues 189–209 traverse the membrane as a helical segment; that stretch reads IFITIPNGLGVLFALMQLILY. The Cytoplasmic portion of the chain corresponds to 210–274; the sequence is AIYYRTTPKK…SISRLSHKLA (65 aa). Residues 218–274 are disordered; that stretch reads KKPSTTGPHPRSRIRTSSYQPSPPSPRAPASSPLSARTTTSMAAMSPSISRLSHKLA. A compositionally biased stretch (low complexity) spans 245–258; that stretch reads APASSPLSARTTTS.

It belongs to the SWEET sugar transporter family. In terms of assembly, forms homooligomers and/or heterooligomers.

Its subcellular location is the cell membrane. In terms of biological role, mediates both low-affinity uptake and efflux of sugar across the plasma membrane. The protein is Putative bidirectional sugar transporter SWEET7d (SWEET7D) of Oryza sativa subsp. japonica (Rice).